Here is a 722-residue protein sequence, read N- to C-terminus: Metal transporter cnnm-5 (722 aa).

The N-terminal stretch at 1–17 (MSLFLFAIFQLALGSPG) is a signal peptide. Residues 18-139 (APNGPNVPLQ…AAAAKYMGDE (122 aa)) lie on the Extracellular side of the membrane. N-linked (GlcNAc...) asparagine glycosylation is found at asparagine 102 and asparagine 114. In terms of domain architecture, CNNM transmembrane spans 132 to 318 (AAKYMGDEIV…AQNEREKTIL (187 aa)). A helical membrane pass occupies residues 140-160 (IVFCFFCILMSAYASGMTLGY). Residues 161 to 196 (MKFSMIDLNTMLKIAEGDAAKKRVRRIMHFRRRSTQ) lie on the Cytoplasmic side of the membrane. Residues 197–217 (LVVTFSLFSSVFTVLFTTTCE) traverse the membrane as a helical segment. Residues 218-227 (KMLHGVSNED) lie on the Extracellular side of the membrane. Residues 228-248 (VLKMAVPALICLIFAEMIPQA) traverse the membrane as a helical segment. Topologically, residues 249-257 (VCNSKFGFN) are cytoplasmic. A helical membrane pass occupies residues 258-278 (LAASLWFVTVIIFFVTLPIAY). Residues 279-722 (PASLVLGRFL…ETTPFMEKQE (444 aa)) lie on the Extracellular side of the membrane. 3 N-linked (GlcNAc...) asparagine glycosylation sites follow: asparagine 320, asparagine 349, and asparagine 371. 2 CBS domains span residues 333-396 (MVPI…LIDE) and 413-473 (TVKF…KIDE). Residues 584–607 (SQRSSSTVNSQQHRQQTTDNSRST) form a disordered region. Asparagine 639 carries an N-linked (GlcNAc...) asparagine glycan. Positions 686 to 722 (LNSRASTSTSTTPACRTPLSVDARSQDETTPFMEKQE) are disordered. A compositionally biased stretch (low complexity) spans 688–703 (SRASTSTSTTPACRTP).

The protein belongs to the ACDP family.

It localises to the cell membrane. In terms of biological role, probable metal transporter. Probably acts redundantly with the other metal transport proteins cnnm-1, cnnm-2, cnnm-3 and cnnm-4 to regulate Mg(2+) homeostasis. This is Metal transporter cnnm-5 from Caenorhabditis elegans.